The primary structure comprises 236 residues: DNA repair protein RecO (236 aa).

The protein belongs to the RecO family.

Functionally, involved in DNA repair and RecF pathway recombination. This chain is DNA repair protein RecO, found in Photobacterium profundum (strain SS9).